The primary structure comprises 570 residues: Mitogen-activated protein kinase 11 (570 aa).

Positions 26–317 (YEVLEVIGKG…AQEALADPYF (292 aa)) constitute a Protein kinase domain. Residues 32 to 40 (IGKGSYGLV) and K55 each bind ATP. Residue D152 is the Proton acceptor of the active site. Residue T188 is modified to Phosphothreonine. The short motif at 188–190 (TDY) is the TXY element. Phosphotyrosine is present on Y190.

It belongs to the protein kinase superfamily. CMGC Ser/Thr protein kinase family. MAP kinase subfamily. Dually phosphorylated on Thr-188 and Tyr-190, which activates the enzyme.

It catalyses the reaction L-seryl-[protein] + ATP = O-phospho-L-seryl-[protein] + ADP + H(+). The catalysed reaction is L-threonyl-[protein] + ATP = O-phospho-L-threonyl-[protein] + ADP + H(+). With respect to regulation, activated by threonine and tyrosine phosphorylation. The chain is Mitogen-activated protein kinase 11 (MPK11) from Oryza sativa subsp. japonica (Rice).